Here is a 233-residue protein sequence, read N- to C-terminus: Small ribosomal subunit protein uS7m (233 aa).

Residues 1-28 (MAAPTAAGLCPRLRAWLPRLTQVRWSRY) constitute a mitochondrion transit peptide.

This sequence belongs to the universal ribosomal protein uS7 family. Component of the mitochondrial ribosome small subunit (28S) which comprises a 12S rRNA and about 30 distinct proteins.

It is found in the mitochondrion. The polypeptide is Small ribosomal subunit protein uS7m (MRPS7) (Gallus gallus (Chicken)).